A 498-amino-acid chain; its full sequence is MSLRNDEQTEKGAVVGKVDSQLSGPGQEEIIQVQTQKPFTTLSAIGIGYGVTNTAVGLLLVLGTGIPMGGSPVIFWGFLAMAAVGLATATTLSELISAIPHPGGQYIWVHKIAPERYRRGLSYATAMISWIAAIAIGASGNLAVPVNAFTIVTLLNPNFVYQRWMGFVVFQLINIVTCFGACFEYFLPKISKALLLVNVLSVSAIIITLFATAKTHTSAKDFFKVVNVSGWPNGVAFLIGLNGSNWCFSCLDVATHLAEEIPSPSTNIPKALIWTIVIAFSSGLLMILAVLVNVGPINTPDYSGLTVLHHITGSKAAAIGLWVPVLFLVFASVWSIQTWQSRLAWSISRESGFPLHRHFSKIFPAPFYTPIWSLIGSAIGTALFGCLYLASELAFNSLIATGILLQYASYSIPTILVLYRGRSKFQHGPFWYPKLGFMANIVMLAWTLVALIFYCFPVYSEVIPSQVNYVSAVLILIAILITSLWFLYAKKHYHVVEI.

The segment covering 1–10 has biased composition (basic and acidic residues); the sequence is MSLRNDEQTE. Positions 1–21 are disordered; that stretch reads MSLRNDEQTEKGAVVGKVDSQ. Helical transmembrane passes span 42–64, 79–99, 126–146, 167–187, and 193–213; these read LSAIGIGYGVTNTAVGLLLVLGT, LAMAAVGLATATTLSELISAI, AMISWIAAIAIGASGNLAVPV, FVVFQLINIVTCFGACFEYFL, and ALLLVNVLSVSAIIITLFATA. 2 N-linked (GlcNAc...) asparagine glycosylation sites follow: Asn227 and Asn242. 6 helical membrane-spanning segments follow: residues 272-292, 316-336, 370-390, 398-418, 436-456, and 469-489; these read LIWTIVIAFSSGLLMILAVLV, AAAIGLWVPVLFLVFASVWSI, PIWSLIGSAIGTALFGCLYLA, LIATGILLQYASYSIPTILVL, GFMANIVMLAWTLVALIFYCF, and YVSAVLILIAILITSLWFLYA.

This sequence belongs to the amino acid-polyamine-organocation (APC) superfamily. Amino acid/choline transporter (ACT) (TC 2.A.3.4) family.

It localises to the membrane. Transmembrane transporter; part of the gene cluster that mediates the biosynthesis of swainsonine, a cytotoxic fungal alkaloid and a potential cancer therapy drug. Does not mediate the secretion of SW and the exact role of swnT in SW biosynthesis remains to be determined. In Arthroderma benhamiae (strain ATCC MYA-4681 / CBS 112371) (Trichophyton mentagrophytes), this protein is Swainsonine transporter swnT.